The following is a 210-amino-acid chain: Frataxin, mitochondrial (210 aa).

A mitochondrion-targeting transit peptide spans 1–41 (MWTFGRRAVAGLLASPSPAQAQTLARAPRLAELAQLCSRRG).

This sequence belongs to the frataxin family. As to quaternary structure, component of the mitochondrial core iron-sulfur cluster (ISC) complex composed of NFS1, LYRM4, NDUFAB1, ISCU, FXN, and FDX2; this complex is a heterohexamer containing two copies of each monomer. Homodimer. Monomer (probable predominant form). Oligomer. Monomers and polymeric aggregates of &gt;1 MDa have been isolated from mitochondria. A small fraction of heterologous overexpressed recombinant frataxin forms high-molecular weight aggregates that incorporate iron. Interacts with LYRM4. Interacts (via ferrous form) with ISCU; the interaction is possible when both are bound to the dimeric form of the cysteine desulfurase complex (NFS1:LYRM4) and the interaction enhances FXN interaction to the dimeric form of the cysteine desulfurase complex (NFS1:LYRM4). Interacts with FECH; one iron-bound FXN monomer seems to interact with a FECH homodimer. Interacts with SDHA and SDHB. Interacts with ACO2; the interaction is dependent on citrate. Interacts with HSPA9. In terms of assembly, interacts with ACO1. Interacts with ISCU (cytoplasmic form). Processed in two steps by mitochondrial processing peptidase (MPP). MPP first cleaves the precursor to intermediate form and subsequently converts the intermediate to yield frataxin mature form (frataxin(81-210)) which is the predominant form. The additional forms, frataxin(56-210) and frataxin(78-210), seem to be produced when the normal maturation process is impaired; their physiological relevance is unsure.

Its subcellular location is the mitochondrion. The protein resides in the cytoplasm. It localises to the cytosol. It carries out the reaction 4 Fe(2+) + O2 + 4 H(+) = 4 Fe(3+) + 2 H2O. Functions as an activator of persulfide transfer to the scaffoding protein ISCU as component of the core iron-sulfur cluster (ISC) assembly complex and participates to the [2Fe-2S] cluster assembly. Accelerates sulfur transfer from NFS1 persulfide intermediate to ISCU and to small thiols such as L-cysteine and glutathione leading to persulfuration of these thiols and ultimately sulfide release. Binds ferrous ion and is released from FXN upon the addition of both L-cysteine and reduced FDX2 during [2Fe-2S] cluster assembly. The core iron-sulfur cluster (ISC) assembly complex is involved in the de novo synthesis of a [2Fe-2S] cluster, the first step of the mitochondrial iron-sulfur protein biogenesis. This process is initiated by the cysteine desulfurase complex (NFS1:LYRM4:NDUFAB1) that produces persulfide which is delivered on the scaffold protein ISCU in a FXN-dependent manner. Then this complex is stabilized by FDX2 which provides reducing equivalents to accomplish the [2Fe-2S] cluster assembly. Finally, the [2Fe-2S] cluster is transferred from ISCU to chaperone proteins, including HSCB, HSPA9 and GLRX5. May play a role in the protection against iron-catalyzed oxidative stress through its ability to catalyze the oxidation of Fe(2+) to Fe(3+); the oligomeric form but not the monomeric form has in vitro ferroxidase activity. May be able to store large amounts of iron in the form of a ferrihydrite mineral by oligomerization; however, the physiological relevance is unsure as reports are conflicting and the function has only been shown using heterologous overexpression systems. May function as an iron chaperone protein that protects the aconitase [4Fe-4S]2+ cluster from disassembly and promotes enzyme reactivation. May play a role as a high affinity iron binding partner for FECH that is capable of both delivering iron to ferrochelatase and mediating the terminal step in mitochondrial heme biosynthesis. Its function is as follows. Modulates the RNA-binding activity of ACO1. May be involved in the cytoplasmic iron-sulfur protein biogenesis. May contribute to oxidative stress resistance and overall cell survival. The sequence is that of Frataxin, mitochondrial from Macaca fascicularis (Crab-eating macaque).